Reading from the N-terminus, the 595-residue chain is Elongation factor 4 (595 aa).

The tr-type G domain maps to 2–183; that stretch reads KNIRNFCIIA…AIVEQVPAPA (182 aa). GTP is bound by residues 14–19 and 130–133; these read DHGKST and NKVD.

It belongs to the TRAFAC class translation factor GTPase superfamily. Classic translation factor GTPase family. LepA subfamily.

Its subcellular location is the cell inner membrane. The catalysed reaction is GTP + H2O = GDP + phosphate + H(+). In terms of biological role, required for accurate and efficient protein synthesis under certain stress conditions. May act as a fidelity factor of the translation reaction, by catalyzing a one-codon backward translocation of tRNAs on improperly translocated ribosomes. Back-translocation proceeds from a post-translocation (POST) complex to a pre-translocation (PRE) complex, thus giving elongation factor G a second chance to translocate the tRNAs correctly. Binds to ribosomes in a GTP-dependent manner. In Porphyromonas gingivalis (strain ATCC 33277 / DSM 20709 / CIP 103683 / JCM 12257 / NCTC 11834 / 2561), this protein is Elongation factor 4.